The chain runs to 129 residues: NADPH-dependent 7-cyano-7-deazaguanine reductase (129 aa).

Cysteine 34 serves as the catalytic Thioimide intermediate. Aspartate 41 acts as the Proton donor in catalysis. Substrate contacts are provided by residues 56–58 (VEL) and 75–76 (HE).

The protein belongs to the GTP cyclohydrolase I family. QueF type 1 subfamily.

It localises to the cytoplasm. The catalysed reaction is 7-aminomethyl-7-carbaguanine + 2 NADP(+) = 7-cyano-7-deazaguanine + 2 NADPH + 3 H(+). The protein operates within tRNA modification; tRNA-queuosine biosynthesis. Its function is as follows. Catalyzes the NADPH-dependent reduction of 7-cyano-7-deazaguanine (preQ0) to 7-aminomethyl-7-deazaguanine (preQ1). This chain is NADPH-dependent 7-cyano-7-deazaguanine reductase, found in Alkalilimnicola ehrlichii (strain ATCC BAA-1101 / DSM 17681 / MLHE-1).